A 96-amino-acid chain; its full sequence is Co-chaperonin GroES (96 aa).

This sequence belongs to the GroES chaperonin family. As to quaternary structure, heptamer of 7 subunits arranged in a ring. Interacts with the chaperonin GroEL.

The protein resides in the cytoplasm. In terms of biological role, together with the chaperonin GroEL, plays an essential role in assisting protein folding. The GroEL-GroES system forms a nano-cage that allows encapsulation of the non-native substrate proteins and provides a physical environment optimized to promote and accelerate protein folding. GroES binds to the apical surface of the GroEL ring, thereby capping the opening of the GroEL channel. The chain is Co-chaperonin GroES from Hydrogenovibrio crunogenus (strain DSM 25203 / XCL-2) (Thiomicrospira crunogena).